The chain runs to 57 residues: MLKWAIIFAIISFISGVFGFRSTSAGTASIAKFLFFLFALITLVLLVLGLLGIGVVA.

2 helical membrane-spanning segments follow: residues 1–21 and 33–53; these read MLKWAIIFAIISFISGVFGFR and FLFFLFALITLVLLVLGLLGI.

Belongs to the UPF0391 family.

It is found in the cell membrane. The sequence is that of UPF0391 membrane protein NE0130 from Nitrosomonas europaea (strain ATCC 19718 / CIP 103999 / KCTC 2705 / NBRC 14298).